A 312-amino-acid chain; its full sequence is Olfactory receptor 2L2 (312 aa).

At 1-24 (MENYNQTSTDFILLGLFPQSRIGL) the chain is on the extracellular side. Asparagine 5 is a glycosylation site (N-linked (GlcNAc...) asparagine). Residues 25–48 (FVFTLIFLIFLMALIGNLSMILLI) form a helical membrane-spanning segment. Topologically, residues 49–56 (FLDIHLHT) are cytoplasmic. The chain crosses the membrane as a helical span at residues 57–78 (PMYFLLSQLSLIDLNYISTIVP). Residues 79 to 99 (KMVYDFLYGNKSISFTGCGIQ) are Extracellular-facing. An N-linked (GlcNAc...) asparagine glycan is attached at asparagine 88. Cysteine 96 and cysteine 188 are joined by a disulfide. A helical transmembrane segment spans residues 100-119 (SFFFLTLAVAEGLLLTSMAY). At 120–138 (DRYVAICFPLHYPIRISKR) the chain is on the cytoplasmic side. A helical membrane pass occupies residues 139 to 157 (VCVMMITGSWMISSINSCA). Over 158–194 (HTVYALCIPYCKSRAINHFFCDVPAMLTLACTDTWVY) the chain is Extracellular. Residues 195–218 (ESTVFLSSTIFLVLPFTGIACSYG) form a helical membrane-spanning segment. The Cytoplasmic portion of the chain corresponds to 219 to 235 (RVLLAVYRMHSAEGRKK). The helical transmembrane segment at 236–258 (AYSTCSTHLTVVSFYYAPFAYTY) threads the bilayer. The Extracellular portion of the chain corresponds to 259–271 (VRPRSLRSPTEDK). A helical membrane pass occupies residues 272–291 (ILAVFYTILTPMLNPIIYSL). At 292-312 (RNKEVMGALTQVIQKIFSVKM) the chain is on the cytoplasmic side.

The protein belongs to the G-protein coupled receptor 1 family.

It is found in the cell membrane. In terms of biological role, odorant receptor. This is Olfactory receptor 2L2 (OR2L2) from Homo sapiens (Human).